The following is a 401-amino-acid chain: Argininosuccinate synthase (401 aa).

ATP is bound at residue A8–S16. Y85 is an L-citrulline binding site. Position 115 (G115) interacts with ATP. T117, N121, and D122 together coordinate L-aspartate. L-citrulline is bound at residue N121. Residues R125, S173, E258, and Y270 each coordinate L-citrulline.

Belongs to the argininosuccinate synthase family. Type 1 subfamily. In terms of assembly, homotetramer.

It is found in the cytoplasm. It carries out the reaction L-citrulline + L-aspartate + ATP = 2-(N(omega)-L-arginino)succinate + AMP + diphosphate + H(+). The protein operates within amino-acid biosynthesis; L-arginine biosynthesis; L-arginine from L-ornithine and carbamoyl phosphate: step 2/3. This chain is Argininosuccinate synthase, found in Staphylococcus aureus (strain Mu3 / ATCC 700698).